The chain runs to 30 residues: KIPCGESCVWIPCVTSIFNCKCENKVCYHD.

Positions 1–30 form a cross-link, cyclopeptide (Lys-Asp); sequence KIPCGESCVWIPCVTSIFNCKCENKVCYHD. Disulfide bonds link Cys4-Cys20, Cys8-Cys22, and Cys13-Cys27.

This is a cyclic peptide.

In terms of biological role, probably participates in a plant defense mechanism. Inhibits the cytopathic effects of the human immunodeficiency virus. The sequence is that of Circulin-D from Chassalia parviflora.